Here is a 244-residue protein sequence, read N- to C-terminus: Histone H1, orphon (244 aa).

Residues 1–21 are compositionally biased toward low complexity; sequence MSDPAPEIEAPVEAAPVASPP. Disordered regions lie at residues 1–59 and 113–244; these read MSDP…PVSE and QAKG…KKAK. The segment covering 35-45 has biased composition (basic and acidic residues); sequence PKAEKPKSDKP. In terms of domain architecture, H15 spans 53–127; that stretch reads THPPVSEMVV…GASGSFKLPP (75 aa). The segment covering 186–203 has biased composition (low complexity); the sequence is AKPASKKAAAPKPKAAKP. The segment covering 213–244 has biased composition (basic residues); sequence ATKAAAKKPVAKPVAKKPAAKPAKKPAAKKAK.

The protein belongs to the histone H1/H5 family.

The protein resides in the nucleus. It is found in the chromosome. Functionally, histones H1 are necessary for the condensation of nucleosome chains into higher-order structures. This is Histone H1, orphon from Chironomus thummi thummi (Midge).